We begin with the raw amino-acid sequence, 180 residues long: MAEDDLCSLFFKLKVEDVTSSDELARHMKNASNERKPLIEPGENQSMDIDEEGGSVGHGLLYLYVDCPTMMLCFYGGSLPYNWMQGALLTNLPPYQHDVTLDEVNRGLRQASGFFGYADPMRSAYFAAFSFPERVIKLNEQMELTSTKGKCLTFDPYASTQLRFEPGELVRHGECKFAIG.

Its function is as follows. Hydrolyzes cytokinin glucosides thus liberating free cytokinins. This chain is Cytokinin-beta-glucosidase 3 (ROLC3), found in Panax ginseng (Korean ginseng).